Consider the following 267-residue polypeptide: MTKVNIGIVGCLGKQGKRLVAEISASPNAQVSAGLVRPGNPYVGQVLGEIVGCNCSAKAIDSLEHLFDVSDIVVEFTNPQTLLECIKMAESKKKPLLSGTTGPAATEMVFEDYIKNIPFLWTTNVSFGVNILAKLVEEAARKLFDYDIEVWEMHHRYKKDSPSGTSLILGRAAAKGRNVPFKKAQYVSGTPQEARQDVNTIGYAVSRGGSDLSDHRIMFVSDEEMIDFNHRTLNKNLYAKGALKAALWLVKQPPGVYTMSDMMAAAE.

Gly10 to Gln15 provides a ligand contact to NAD(+). Position 37 (Arg37) interacts with NADP(+). NAD(+)-binding positions include Gly99–Thr101 and Thr122–Val125. The active-site Proton donor/acceptor is His154. Residue His155 coordinates (S)-2,3,4,5-tetrahydrodipicolinate. Residue Lys158 is the Proton donor of the active site. Gly164–Thr165 lines the (S)-2,3,4,5-tetrahydrodipicolinate pocket.

This sequence belongs to the DapB family.

The protein resides in the cytoplasm. The enzyme catalyses (S)-2,3,4,5-tetrahydrodipicolinate + NAD(+) + H2O = (2S,4S)-4-hydroxy-2,3,4,5-tetrahydrodipicolinate + NADH + H(+). The catalysed reaction is (S)-2,3,4,5-tetrahydrodipicolinate + NADP(+) + H2O = (2S,4S)-4-hydroxy-2,3,4,5-tetrahydrodipicolinate + NADPH + H(+). The protein operates within amino-acid biosynthesis; L-lysine biosynthesis via DAP pathway; (S)-tetrahydrodipicolinate from L-aspartate: step 4/4. Its function is as follows. Catalyzes the conversion of 4-hydroxy-tetrahydrodipicolinate (HTPA) to tetrahydrodipicolinate. The protein is 4-hydroxy-tetrahydrodipicolinate reductase of Ehrlichia canis (strain Jake).